The sequence spans 360 residues: Venom serine protease Bi-VSP (360 aa).

Residues 1–26 (MTGSKMLFACLALIAFLHPLVHVASA) form the signal peptide. The propeptide occupies 27-113 (QECTTPNNKA…CGFSNVSHTR (87 aa)). In terms of domain architecture, Clip spans 28-79 (ECTTPNNKAGKCLGIRVCKPLLEMLQTQGHAAADFLRQSVCKYENNNPIVCC). Intrachain disulfides connect Cys-29-Cys-78, Cys-39-Cys-68, Cys-45-Cys-79, Cys-104-Cys-230, Cys-147-Cys-163, Cys-278-Cys-296, and Cys-307-Cys-335. The N-linked (GlcNAc...) asparagine glycan is linked to Asn-108. In terms of domain architecture, Peptidase S1 spans 114–360 (VVGGKPAVLG…LDDFILPAMQ (247 aa)). The active-site Charge relay system is the His-162. Residues Asp-176, Asn-178, Arg-181, and Asp-184 each contribute to the Ca(2+) site. The active-site Charge relay system is Asp-210. The active-site Charge relay system is the Ser-311.

The protein belongs to the peptidase S1 family. CLIP subfamily. In terms of tissue distribution, expressed by the venom gland.

It localises to the secreted. Multifunctional venom serine protease. In insects, it acts as an arthropod prophenoloxidase-activating factor, thereby triggering the phenoloxidase cascade. When injected into larvae, it induces a lethal melanization response in target insects by modulating the innate immune response. In mammals, it converts fibrinogen into fibrin, activates prothrombin, and also degrades fibrin. In mammal, it may act in a cooperative manner with the serine protease inhibitor Bi-KTI (AC G3LH89) to promote the spread of bee venom under anti-bleeding conditions. In Bombus ignitus (Bumblebee), this protein is Venom serine protease Bi-VSP.